The primary structure comprises 190 residues: Nascent polypeptide-associated complex subunit alpha (190 aa).

Disordered stretches follow at residues phenylalanine 20–lysine 42 and serine 123–lysine 155. Residues histidine 30–glutamate 40 show a composition bias toward basic and acidic residues. Residues serine 37–alanine 102 enclose the NAC-A/B domain. Positions glutamate 138–glycine 151 are enriched in acidic residues. One can recognise a UBA domain in the interval valine 152–alanine 189.

The protein belongs to the NAC-alpha family. Part of the nascent polypeptide-associated complex (NAC), consisting of EGD2 and EGD1. NAC associates with ribosomes via EGD1.

The protein localises to the cytoplasm. It localises to the nucleus. In terms of biological role, component of the nascent polypeptide-associated complex (NAC), a dynamic component of the ribosomal exit tunnel, protecting the emerging polypeptides from interaction with other cytoplasmic proteins to ensure appropriate nascent protein targeting. The NAC complex also promotes mitochondrial protein import by enhancing productive ribosome interactions with the outer mitochondrial membrane and blocks the inappropriate interaction of ribosomes translating non-secretory nascent polypeptides with translocation sites in the membrane of the endoplasmic reticulum. EGD2 may also be involved in transcription regulation. The chain is Nascent polypeptide-associated complex subunit alpha (EGD2) from Mycosarcoma maydis (Corn smut fungus).